We begin with the raw amino-acid sequence, 555 residues long: MNVDAEASMAVISLLFLAVMYVVHHPLMVSDRMDLDTLARSRQLEKRMSEEMRLLEMEFEERKRAAEQRQKAENFWTGDTSSDQLVLGKKDMGWPFQADGQEGPLGWMLGNLWNTGLFCLFLVFELLRQNMQHEPAFDSSSEEEEEEVRVVPVTSYNWLTDFPSQEALDSFYKHYVQNAIRDLPCTCEFVESFVDDLIEACRVLSRQEAHPQLEDCLGIGAAFEKWGTLHETQKFDILVPIVPPQGTMFVLEMRDPALGRRCGCVLVESECVCKREKLLGDVLCLVHHHRDPSAVLGKCSSSIKAALCTGFHLDVCKTVQWFRNMMGNAWALVAHKYDFKLSLPPSTTSCKLRLDYRSGRFLSIHLVLGVQREDTLVYLVSQAPDQEQLTSVDWPESFVACEHLFLKLVGRFAPENTCHLKCLQIILSLRQHQSLPHGASRPILTSYHFKTALMHLLLRLPLTDWAHNMLSQRLQDILWFLGRGLQQRSLHHFLIGNNFLPLTIPIPKTFRNAEPVNLFQHLVLNPKAHSQAVEEFQNLLTQVKTLPHAPLAAAP.

A signal peptide spans 1-24; that stretch reads MNVDAEASMAVISLLFLAVMYVVH. Over 25–103 the chain is Extracellular; sequence HPLMVSDRMD…WPFQADGQEG (79 aa). Residues 38 to 74 adopt a coiled-coil conformation; sequence LARSRQLEKRMSEEMRLLEMEFEERKRAAEQRQKAEN. A helical transmembrane segment spans residues 104 to 124; the sequence is PLGWMLGNLWNTGLFCLFLVF. The Cytoplasmic segment spans residues 125–555; that stretch reads ELLRQNMQHE…LPHAPLAAAP (431 aa).

It belongs to the ITPRIP family. Expressed in testis and tumoral cells.

The protein localises to the cell membrane. Its function is as follows. Functions as a ligand of CD3E, inhibiting TCR-CD3 complex signaling to regulate T cell activation. Induces stable CD3E-NCK1 binding, thereby preventing the CD3E-ZAP70 interaction and subsequently inhibiting the activation of the downstream ERK-NFkB signaling cascade and calcium influx. The protein is Inositol 1,4,5-trisphosphate receptor-interacting protein-like 1 of Homo sapiens (Human).